A 460-amino-acid polypeptide reads, in one-letter code: Zinc transporter 6 (460 aa).

The Cytoplasmic segment spans residues Met-1–Lys-33. Residues Ile-34–Ser-54 form a helical membrane-spanning segment. Residues Thr-55–Thr-64 lie on the Extracellular side of the membrane. Residues Tyr-65–Val-85 form a helical membrane-spanning segment. At Lys-86–Arg-98 the chain is on the cytoplasmic side. A helical membrane pass occupies residues Phe-99 to Leu-119. At Lys-120–Thr-134 the chain is on the extracellular side. A helical transmembrane segment spans residues Gly-135–Val-155. Over Arg-156 to Pro-200 the chain is Cytoplasmic. Residues Phe-201–Ile-221 traverse the membrane as a helical segment. Over Asn-222 to Asp-228 the chain is Extracellular. The chain crosses the membrane as a helical span at residues Thr-229–Tyr-249. At Ser-250–Pro-460 the chain is on the cytoplasmic side. The disordered stretch occupies residues Pro-372–Pro-392.

The protein belongs to the cation diffusion facilitator (CDF) transporter (TC 2.A.4) family. SLC30A subfamily. As to quaternary structure, heterodimer with SLC30A5; form a functional zinc ion transmembrane transporter.

The protein localises to the golgi apparatus. The protein resides in the trans-Golgi network membrane. In terms of biological role, has probably no intrinsic transporter activity but together with SLC30A5 forms a functional zinc ion:proton antiporter heterodimer, mediating zinc entry into the lumen of organelles along the secretory pathway. As part of that zinc ion:proton antiporter, contributes to zinc ion homeostasis within the early secretory pathway and regulates the activation and folding of enzymes like alkaline phosphatases and enzymes involved in phosphatidylinositol glycan anchor biosynthesis. In Gallus gallus (Chicken), this protein is Zinc transporter 6 (SLC30A6).